We begin with the raw amino-acid sequence, 292 residues long: Tissue factor (292 aa).

An N-terminal signal peptide occupies residues 1-35; sequence MATPNGPRVPCPQAAVARALLFGLVLIQGAGVAGT. Over 36 to 248 the chain is Extracellular; sequence TDVVVAYNIT…TSHEKVLSTE (213 aa). An N-linked (GlcNAc...) asparagine glycan is attached at N43. Residues 46 to 48 carry the WKS motif motif; sequence WKS. The cysteines at positions 81 and 89 are disulfide-linked. N-linked (GlcNAc...) asparagine glycans are attached at residues N153 and N181. C215 and C238 are joined by a disulfide. A helical membrane pass occupies residues 249 to 271; the sequence is LFFIIGTVMLVIIIFIVVLSVSL. The Cytoplasmic portion of the chain corresponds to 272–292; it reads HKCRKVRAERSGKENTPLNAA. C274 is lipidated: S-palmitoyl cysteine.

This sequence belongs to the tissue factor family. As to quaternary structure, interacts with HSPE; the interaction, inhibited by heparin, promotes the generation of activated factor X and activates coagulation in the presence of activated factor VII.

The protein resides in the membrane. In terms of biological role, initiates blood coagulation by forming a complex with circulating factor VII or VIIa. The [TF:VIIa] complex activates factors IX or X by specific limited proteolysis. TF plays a role in normal hemostasis by initiating the cell-surface assembly and propagation of the coagulation protease cascade. In Bos taurus (Bovine), this protein is Tissue factor (F3).